A 168-amino-acid chain; its full sequence is Small ribosomal subunit protein uS9 (168 aa).

A compositionally biased stretch (low complexity) spans 1-29 (MAQNEELTAEAVEAEETLTSYTSESTSAE). The segment at 1–36 (MAQNEELTAEAVEAEETLTSYTSESTSAEDAPKKER) is disordered.

The protein belongs to the universal ribosomal protein uS9 family.

The polypeptide is Small ribosomal subunit protein uS9 (Paenarthrobacter aurescens (strain TC1)).